Consider the following 246-residue polypeptide: Probable H/ACA ribonucleoprotein complex subunit 1-like protein (246 aa).

2 disordered regions span residues 1–61 and 155–246; these read MSFR…GGYD and PQVG…TKFD. 2 RGG-box regions span residues 4 to 59 and 161 to 223; these read RGGR…GRGG and RGRG…RGRG. Residues 168–180 show a composition bias toward basic and acidic residues; that stretch reads RGGDRGRGGDRGR. Gly residues predominate over residues 181-221; the sequence is GGFGGRGGGGGGFRGGSRGGFGGGDRGGFRGGRGGDFGGRG.

This sequence belongs to the GAR1 family. Component of the small nucleolar ribonucleoprotein particle containing H/ACA-type snoRNAs (H/ACA snoRNPs).

Its subcellular location is the nucleus. The protein localises to the nucleolus. In terms of biological role, required for ribosome biogenesis. Part of a complex which catalyzes pseudouridylation of rRNA. This involves the isomerization of uridine such that the ribose is subsequently attached to C5, instead of the normal N1. Pseudouridine ('psi') residues may serve to stabilize the conformation of rRNAs. The sequence is that of Probable H/ACA ribonucleoprotein complex subunit 1-like protein from Caenorhabditis briggsae.